The following is a 493-amino-acid chain: Calcium-binding tyrosine phosphorylation-regulated protein (493 aa).

One can recognise an RIIa domain in the interval 12-49 (YGLKTLLEGISRAVLKTNPSNINQFAAAYFQELTMYRG). Disordered stretches follow at residues 85-164 (EPGK…VSPE), 244-271 (DLGS…QEPP), 330-354 (NEQS…TTSG), and 426-493 (IVSD…STAE). Residues 90–100 (SVESKVPTQME) show a composition bias toward polar residues. Positions 101–117 (KSTDTDEDNVTRTEYSD) are enriched in basic and acidic residues. Positions 141-152 (SSKPATPKTTTP) are enriched in low complexity. At Thr151 the chain carries Phosphothreonine. The residue at position 155 (Ser155) is a Phosphoserine. 2 stretches are compositionally biased toward polar residues: residues 426–442 (IVSD…NSVP) and 461–470 (SGTSVKSSSG). Positions 484-493 (IEPEGESTAE) are enriched in acidic residues.

Interacts with FSCB. Isoform 3 self-associates. Isoform 3 and isoform 5 interact with GSK3B. Isoform 1 does not interact with GSK3B. Isoform 1 is phosphorylated on tyrosine residues during in vitro capacitation. Isoform 3 and isoform 5 are phosphorylated by GSK3B in vitro. Dephosphorylation affects its ability to bind calcium. As to expression, expressed in elongating spermatids and spermatozoa (at protein level). Isoform 1 is expressed in testis. Isoform 3 and isoform 5 are also expressed in brain, pancreas and numerous brain tumors.

The protein resides in the cytoplasm. Its subcellular location is the cytoskeleton. It is found in the cell projection. It localises to the cilium. The protein localises to the flagellum. The protein resides in the nucleus. Its function is as follows. May function as a regulator of both motility- and head-associated functions such as capacitation and the acrosome reaction. Isoform 1 binds calcium in vitro. Isoform 2 and isoform 6 probably bind calcium. Isoform 3 and isoform 5 do not bind calcium in vitro. Isoform 4 probably does not bind calcium. This chain is Calcium-binding tyrosine phosphorylation-regulated protein (CABYR), found in Homo sapiens (Human).